We begin with the raw amino-acid sequence, 802 residues long: Endoplasmin (802 aa).

The N-terminal stretch at 1–21 (MRVLWVLGLCCVLLTFGFVRA) is a signal peptide. The SRT pseudosubstrate motif signature appears at 42–44 (SRT). Asn62 carries an N-linked (GlcNAc...) asparagine glycan. Phosphoserine is present on Ser64. Asn107 is a glycosylation site (N-linked (GlcNAc...) asparagine). ATP is bound by residues Asn107, Asp149, and Asn162. Lys168 bears the N6-(2-hydroxyisobutyryl)lysine mark. Ser172 is modified (phosphoserine). Phe199 is an ATP binding site. The N-linked (GlcNAc...) asparagine glycan is linked to Asn217. A compositionally biased stretch (acidic residues) spans 290–317 (EEPLEEDEAAKEEKEESDDEAAVEEEEE). The disordered stretch occupies residues 290–323 (EEPLEEDEAAKEEKEESDDEAAVEEEEEEKKPKT). 2 positions are modified to phosphoserine: Ser306 and Ser403. An N6-succinyllysine modification is found at Lys404. N-linked (GlcNAc...) asparagine glycosylation is present at Asn445. Ser447 bears the Phosphoserine mark. Position 479 is an N6-acetyllysine (Lys479). Asn481 and Asn502 each carry an N-linked (GlcNAc...) asparagine glycan. Lys633 is subject to N6-succinyllysine. The segment at 749 to 802 (IDPEAQVEEEPEEEPEDTSEDAEDSEQDEGEEMDAGTEEEEEETEKESTEKDEL) is disordered. Over residues 753 to 793 (AQVEEEPEEEPEDTSEDAEDSEQDEGEEMDAGTEEEEEETE) the composition is skewed to acidic residues. Thr785 is modified (phosphothreonine). The Prevents secretion from ER motif lies at 799-802 (KDEL).

The protein belongs to the heat shock protein 90 family. Homodimer; disulfide-linked. Component of an EIF2 complex at least composed of CELF1/CUGBP1, CALR, CALR3, EIF2S1, EIF2S2, HSP90B1 and HSPA5. Part of a large chaperone multiprotein complex comprising DNAJB11, HSP90B1, HSPA5, HYOU, PDIA2, PDIA4, PDIA6, PPIB, SDF2L1, UGGT1 and very small amounts of ERP29, but not, or at very low levels, CALR nor CANX. Hyperglycosylated form interacts with OS9; promoting its degradation by the endoplasmic reticulum associated degradation (ERAD). Interacts with AIMP1; regulates its retention in the endoplasmic reticulum. Interacts with CNPY3; this interaction is disrupted in the presence of ATP. Interacts with TLR4, TLR9 and TLR11, but not with TLR3. Interacts with MZB1 in a calcium-dependent manner. Interacts with METTL23. Interacts with IL1B; the interaction facilitates cargo translocation into the ERGIC. Interacts with EIF2AK3. Phosphorylated by CK2. Post-translationally, N-glycosylated cotranslationally at Asn-217 by STT3A-containing OST-A complex: this glycosylation is constitutive. In response to various stress, 5 additional facultative sites (Asn-62, Asn-107, Asn-445, Asn-481 and Asn-502) can be glycosylated post-translationally by STT3B-containing OST-B complex, leading to a hyperglycosylated form that is degraded by the ER-associated degradation (ERAD) pathway. In normal conditions, the OST-A complex together with CCDC134 prevent glycosylation at facultative sites during protein folding, thereby preventing hyperglycosylation. Mechanistically, nascent HSP90B1 is tethered during translation to a specialized CCDC134-containing translocon that forms a microenvironment for its folding, in which STT3A associates with the SRT pseudosubstrate motif, and prevents access to facultative glycosylation sites until folding is completed, rendering its facultative sites inaccessible to the OST-B complex.

It localises to the endoplasmic reticulum lumen. The protein localises to the sarcoplasmic reticulum lumen. The protein resides in the melanosome. The enzyme catalyses ATP + H2O = ADP + phosphate + H(+). ATP-dependent chaperone involved in the processing of proteins in the endoplasmic reticulum, regulating their transport. Together with MESD, acts as a modulator of the Wnt pathway by promoting the folding of LRP6, a coreceptor of the canonical Wnt pathway. When associated with CNPY3, required for proper folding of Toll-like receptors. Promotes folding and trafficking of TLR4 to the cell surface. May participate in the unfolding of cytosolic leaderless cargos (lacking the secretion signal sequence) such as the interleukin 1/IL-1 to facilitate their translocation into the ERGIC (endoplasmic reticulum-Golgi intermediate compartment) and secretion; the translocation process is mediated by the cargo receptor TMED10. In Mus musculus (Mouse), this protein is Endoplasmin (Hsp90b1).